The chain runs to 221 residues: Redox-sensing transcriptional repressor Rex (221 aa).

The segment at residues 17–56 (IYYYYLSSLHEAGIKRINSTEISEAIKFDAATVRRDFSYF) is a DNA-binding region (H-T-H motif). An NAD(+)-binding site is contributed by 91–96 (GTGNLG).

Belongs to the transcriptional regulatory Rex family. As to quaternary structure, homodimer.

It is found in the cytoplasm. In terms of biological role, modulates transcription in response to changes in cellular NADH/NAD(+) redox state. In Oenococcus oeni (strain ATCC BAA-331 / PSU-1), this protein is Redox-sensing transcriptional repressor Rex.